We begin with the raw amino-acid sequence, 952 residues long: Eukaryotic translation initiation factor 3 subunit A (952 aa).

A PCI domain is found at 315 to 491 (HAERAGIVND…QTITFVSTPP (177 aa)). Positions 522 to 849 (DAFAAAIAQA…RRQAEKAAAT (328 aa)) form a coiled coil. Over residues 757–797 (EKVIKRKREEKERKLKEAREAEERKRKEEEEAAQKAEEEAR) the composition is skewed to basic and acidic residues. The disordered stretch occupies residues 757–952 (EKVIKRKREE…RGMPSTRGGA (196 aa)). The span at 798–809 (AAAALEAEAAAA) shows a compositional bias: low complexity. Residues 810 to 844 (EQRRAEREAQRQSDLERIRAQQEREEEALRRRQAE) show a composition bias toward basic and acidic residues. Low complexity-rich tracts occupy residues 856 to 878 (RPPA…GGPS) and 893 to 918 (GAPV…SNGP).

It belongs to the eIF-3 subunit A family. Component of the eukaryotic translation initiation factor 3 (eIF-3) complex.

The protein localises to the cytoplasm. Its function is as follows. RNA-binding component of the eukaryotic translation initiation factor 3 (eIF-3) complex, which is involved in protein synthesis of a specialized repertoire of mRNAs and, together with other initiation factors, stimulates binding of mRNA and methionyl-tRNAi to the 40S ribosome. The eIF-3 complex specifically targets and initiates translation of a subset of mRNAs involved in cell proliferation. The sequence is that of Eukaryotic translation initiation factor 3 subunit A from Cryptococcus neoformans var. neoformans serotype D (strain B-3501A) (Filobasidiella neoformans).